The primary structure comprises 701 residues: Alpha-1,4-glucan:maltose-1-phosphate maltosyltransferase (701 aa).

The disordered stretch occupies residues 286–317 (HRKGRNNSPTAAPTDVGSPWAIGSDEGGHDTV). Alpha-maltose 1-phosphate contacts are provided by lysine 288, glutamine 348, and aspartate 383. Aspartate 418 serves as the catalytic Nucleophile. Residue asparagine 419 participates in alpha-maltose 1-phosphate binding. The active-site Proton donor is glutamate 447. An alpha-maltose 1-phosphate-binding site is contributed by 557–558 (KY).

Belongs to the glycosyl hydrolase 13 family. GlgE subfamily. In terms of assembly, homodimer.

The catalysed reaction is alpha-maltose 1-phosphate + [(1-&gt;4)-alpha-D-glucosyl](n) = [(1-&gt;4)-alpha-D-glucosyl](n+2) + phosphate. The protein operates within glycan biosynthesis; glycogen biosynthesis. Essential maltosyltransferase that uses maltose 1-phosphate (M1P) as the sugar donor to elongate linear or branched alpha-(1-&gt;4)-glucans. Maltooligosaccharides with a degree of polymerization (DP) superior or equal to 4 are efficient acceptors, with DP5 being optimal in the GlgE-catalyzed polymerization with M1P. Is specific for the alpha-anomer of M1P as substrate, since the beta-anomer of M1P gives no activity. Exhibits an alpha-retaining catalytic mechanism. Is also able to catalyze the reverse reaction in vitro, releasing M1P from glycogen in the presence of inorganic phosphate. Also catalyzes disproportionation reactions through maltosyl transfer between maltooligosaccharides. Is involved in a branched alpha-glucan biosynthetic pathway from trehalose, together with TreS, Mak and GlgB. This is Alpha-1,4-glucan:maltose-1-phosphate maltosyltransferase (glgE) from Mycobacterium tuberculosis (strain CDC 1551 / Oshkosh).